Here is a 260-residue protein sequence, read N- to C-terminus: UPF0246 protein Bcep18194_A5551 (260 aa).

Belongs to the UPF0246 family.

This is UPF0246 protein Bcep18194_A5551 from Burkholderia lata (strain ATCC 17760 / DSM 23089 / LMG 22485 / NCIMB 9086 / R18194 / 383).